The chain runs to 86 residues: Progonadoliberin-2 (86 aa).

A signal peptide spans 1-24; the sequence is MVSVARLVFMLGPLLCLGAQLSSS. At Q25 the chain carries Pyrrolidone carboxylic acid. A Glycine amide modification is found at G34.

Belongs to the GnRH family.

It localises to the secreted. Its function is as follows. Stimulates the secretion of gonadotropins. The sequence is that of Progonadoliberin-2 (gnrh2) from Oncorhynchus mykiss (Rainbow trout).